Here is a 192-residue protein sequence, read N- to C-terminus: A-type ATP synthase subunit E (192 aa).

It belongs to the V-ATPase E subunit family. In terms of assembly, has multiple subunits with at least A(3), B(3), C, D, E, F, H, I and proteolipid K(x).

It is found in the cell membrane. Its function is as follows. Component of the A-type ATP synthase that produces ATP from ADP in the presence of a proton gradient across the membrane. The sequence is that of A-type ATP synthase subunit E from Methanocorpusculum labreanum (strain ATCC 43576 / DSM 4855 / Z).